Here is a 147-residue protein sequence, read N- to C-terminus: Large ribosomal subunit protein uL22c (147 aa).

It belongs to the universal ribosomal protein uL22 family. Part of the 50S ribosomal subunit.

The protein resides in the plastid. This protein binds specifically to 23S rRNA. Its function is as follows. The globular domain of the protein is located near the polypeptide exit tunnel on the outside of the subunit, while an extended beta-hairpin is found that lines the wall of the exit tunnel in the center of the 70S ribosome. The sequence is that of Large ribosomal subunit protein uL22c (rpl22) from Cuscuta gronovii (Common dodder).